Consider the following 103-residue polypeptide: Turripeptide OL55-like (103 aa).

In terms of processing, contains 8 disulfide bonds. As to expression, expressed by the venom duct.

The protein resides in the secreted. Its function is as follows. Acts as a neurotoxin by inhibiting an ion channel. The polypeptide is Turripeptide OL55-like (Lophiotoma albina (Sea snail)).